Here is a 201-residue protein sequence, read N- to C-terminus: Small ribosomal subunit protein uS4 (201 aa).

An S4 RNA-binding domain is found at 93 to 156 (RRLDNMVYRL…KNLDIIKNAV (64 aa)).

This sequence belongs to the universal ribosomal protein uS4 family. As to quaternary structure, part of the 30S ribosomal subunit. Contacts protein S5. The interaction surface between S4 and S5 is involved in control of translational fidelity.

In terms of biological role, one of the primary rRNA binding proteins, it binds directly to 16S rRNA where it nucleates assembly of the body of the 30S subunit. With S5 and S12 plays an important role in translational accuracy. In Limosilactobacillus reuteri subsp. reuteri (strain JCM 1112) (Lactobacillus reuteri), this protein is Small ribosomal subunit protein uS4.